A 414-amino-acid chain; its full sequence is ORC1-type DNA replication protein 1 (414 aa).

Residues 70–74, Tyr-213, and Arg-225 contribute to the ATP site; that span reads TGKTA.

Belongs to the CDC6/cdc18 family.

Its function is as follows. Involved in regulation of DNA replication. The protein is ORC1-type DNA replication protein 1 (cdc6-1) of Methanosarcina acetivorans (strain ATCC 35395 / DSM 2834 / JCM 12185 / C2A).